The primary structure comprises 154 residues: Transcriptional repressor NrdR (154 aa).

Residues 3 to 34 (CPFCGAHDTKVIDSRLVAEGDQVRRRRECLAC) fold into a zinc finger. In terms of domain architecture, ATP-cone spans 49–139 (PRLIKQDGSR…VYRRFQDLNE (91 aa)).

Belongs to the NrdR family. Requires Zn(2+) as cofactor.

Its function is as follows. Negatively regulates transcription of bacterial ribonucleotide reductase nrd genes and operons by binding to NrdR-boxes. This is Transcriptional repressor NrdR from Pseudomonas aeruginosa (strain LESB58).